The primary structure comprises 182 residues: ATP synthase subunit delta (182 aa).

The protein belongs to the ATPase delta chain family. As to quaternary structure, F-type ATPases have 2 components, F(1) - the catalytic core - and F(0) - the membrane proton channel. F(1) has five subunits: alpha(3), beta(3), gamma(1), delta(1), epsilon(1). CF(0) has four main subunits: a(1), b(1), b'(1) and c(10-14). The alpha and beta chains form an alternating ring which encloses part of the gamma chain. F(1) is attached to F(0) by a central stalk formed by the gamma and epsilon chains, while a peripheral stalk is formed by the delta, b and b' chains.

It is found in the cellular thylakoid membrane. F(1)F(0) ATP synthase produces ATP from ADP in the presence of a proton or sodium gradient. F-type ATPases consist of two structural domains, F(1) containing the extramembraneous catalytic core and F(0) containing the membrane proton channel, linked together by a central stalk and a peripheral stalk. During catalysis, ATP synthesis in the catalytic domain of F(1) is coupled via a rotary mechanism of the central stalk subunits to proton translocation. In terms of biological role, this protein is part of the stalk that links CF(0) to CF(1). It either transmits conformational changes from CF(0) to CF(1) or is implicated in proton conduction. The polypeptide is ATP synthase subunit delta (Synechococcus sp. (strain CC9311)).